The following is a 194-amino-acid chain: GTP cyclohydrolase 1 (194 aa).

Cys83, His86, and Cys155 together coordinate Zn(2+).

It belongs to the GTP cyclohydrolase I family. In terms of assembly, toroid-shaped homodecamer, composed of two pentamers of five dimers.

It catalyses the reaction GTP + H2O = 7,8-dihydroneopterin 3'-triphosphate + formate + H(+). Its pathway is cofactor biosynthesis; 7,8-dihydroneopterin triphosphate biosynthesis; 7,8-dihydroneopterin triphosphate from GTP: step 1/1. This Streptococcus pyogenes serotype M3 (strain ATCC BAA-595 / MGAS315) protein is GTP cyclohydrolase 1.